The following is a 1002-amino-acid chain: Lon protease homolog, mitochondrial (1002 aa).

The Lon N-terminal domain maps to 102–313; that stretch reads VIALPLPHRP…LTLELVKKEM (212 aa). 468 to 475 lines the ATP pocket; the sequence is GPPGVGKT. Residues 811-995 enclose the Lon proteolytic domain; sequence QTPVGVVMGL…NEIFDIAFQS (185 aa). Residues Ser901 and Lys944 contribute to the active site.

The protein belongs to the peptidase S16 family. Homohexamer or homoheptamer. Organized in a ring with a central cavity.

It is found in the mitochondrion matrix. The catalysed reaction is Hydrolysis of proteins in presence of ATP.. Its function is as follows. ATP-dependent serine protease that mediates the selective degradation of misfolded, unassembled or oxidatively damaged polypeptides as well as certain short-lived regulatory proteins in the mitochondrial matrix. May also have a chaperone function in the assembly of inner membrane protein complexes. Participates in the regulation of mitochondrial gene expression and in the maintenance of the integrity of the mitochondrial genome. Binds to mitochondrial DNA in a site-specific manner. In Oryza sativa subsp. japonica (Rice), this protein is Lon protease homolog, mitochondrial.